The following is a 158-amino-acid chain: uncharacterized protein (158 aa).

Disordered regions lie at residues 1–86 (MDFR…DHWW) and 138–158 (ASQV…LLGF). Positions 7-76 (SPTTCTTPAS…PTPASSGSAA (70 aa)) are enriched in low complexity.

This is an uncharacterized protein from Homo sapiens (Human).